We begin with the raw amino-acid sequence, 527 residues long: Inosine-5'-monophosphate dehydrogenase (527 aa).

CBS domains lie at 121-183 (FILD…VTAV) and 184-240 (MSTD…PLAS). Residues 277–279 (DSS) and 327–329 (GMG) contribute to the NAD(+) site. K(+) contacts are provided by Gly329 and Gly331. Ser332 contacts IMP. Cys334 provides a ligand contact to K(+). The active-site Thioimidate intermediate is Cys334. IMP contacts are provided by residues 367–369 (DGG) and 390–391 (GS). Catalysis depends on Arg440, which acts as the Proton acceptor. Gln452 is an IMP binding site. The tract at residues 506 to 527 (ASAQTEGNVHGLHSHEKKLYSS) is disordered. K(+) is bound by residues Glu511 and Gly512. The segment covering 518 to 527 (HSHEKKLYSS) has biased composition (basic and acidic residues).

This sequence belongs to the IMPDH/GMPR family. Homotetramer. K(+) is required as a cofactor.

The protein localises to the cytoplasm. It catalyses the reaction IMP + NAD(+) + H2O = XMP + NADH + H(+). It participates in purine metabolism; XMP biosynthesis via de novo pathway; XMP from IMP: step 1/1. Mycophenolic acid (MPA) is a non-competitive inhibitor that prevents formation of the closed enzyme conformation by binding to the same site as the amobile flap. In contrast, mizoribine monophosphate (MZP) is a competitive inhibitor that induces the closed conformation. MPA is a potent inhibitor of mammalian IMPDHs but a poor inhibitor of the bacterial enzymes. MZP is a more potent inhibitor of bacterial IMPDH. Its function is as follows. Catalyzes the conversion of inosine 5'-phosphate (IMP) to xanthosine 5'-phosphate (XMP), the first committed and rate-limiting step in the de novo synthesis of guanine nucleotides, and therefore plays an important role in the regulation of cell growth. Part of the gene cluster that mediates the biosynthesis of mycophenolic acid (MPA), the first isolated antibiotic natural product in the world. Does not play a role in the biosynthesis of MPA, but is involved in self resistance to MPA, since MPA acts as an inhibitor of IMP dehydrogenases. The protein is Inosine-5'-monophosphate dehydrogenase of Penicillium brevicompactum.